Reading from the N-terminus, the 518-residue chain is Vesicular inhibitory amino acid transporter (518 aa).

Topologically, residues 1-125 are cytoplasmic; sequence MATLIRSKLS…WNVTNAIQGM (125 aa). Residues 66–98 form a disordered region; that stretch reads EVPSGDPTAEGDSHYQRDGTGPPSSASKDEGLC. A helical transmembrane segment spans residues 126-146; it reads FVLGLPYAILHGGYLGLFLII. Over 147-197 the chain is Lumenal, vesicle; it reads FAAVVCCYTGKILIACLYEENEDGETVRVRDSYVDIANACCAPRFPKLGGR. Residues 198 to 218 form a helical membrane-spanning segment; sequence VVNVAQIIELVMTCILYVVVS. Residues 219-258 lie on the Cytoplasmic side of the membrane; that stretch reads GNLMYNSFPSLPISQKSWSIIATAMLLPCAFLKNLKAVSK. Residues 259–279 form a helical membrane-spanning segment; the sequence is FSLLCTLAHFVINVLVIAYCL. Topologically, residues 280–298 are lumenal, vesicle; the sequence is SRARDWAWDKVKFYIDVKK. A helical membrane pass occupies residues 299–319; it reads FPISIGIIVFSYTSQIFLPSL. At 320-334 the chain is on the cytoplasmic side; that stretch reads EGNMQSPKEFHCMMN. Residues 335–355 form a helical membrane-spanning segment; that stretch reads WTHIAACILKGLFALVAYLTW. The Lumenal, vesicle segment spans residues 356-376; it reads ADETKEVITDNLPSTIRAVVN. A helical membrane pass occupies residues 377-397; that stretch reads LFLVAKALLSYPLPFFAAVEV. Residues 398–431 lie on the Cytoplasmic side of the membrane; sequence LEKSLFQEGARAFFPNCYGGDGRLKSWGLTLRCA. The chain crosses the membrane as a helical span at residues 432 to 452; sequence LVVFTLLMAIYVPHFALLMGL. At 453–454 the chain is on the lumenal, vesicle side; the sequence is TG. Residues 455 to 475 traverse the membrane as a helical segment; that stretch reads SLTGAGLCFLLPSLFHLKLLW. At 476-482 the chain is on the cytoplasmic side; that stretch reads RKLQWHQ. The helical transmembrane segment at 483–503 threads the bilayer; that stretch reads VFFDVSIFVIGSICSVSGFVH. Over 504–518 the chain is Lumenal, vesicle; it reads SLEGLIEAFRFNIED.

The protein belongs to the amino acid/polyamine transporter 2 family.

Its subcellular location is the cytoplasmic vesicle membrane. The protein resides in the presynapse. It catalyses the reaction 4-aminobutanoate(out) + n H(+)(in) = 4-aminobutanoate(in) + n H(+)(out). It carries out the reaction glycine(out) + n H(+)(in) = glycine(in) + n H(+)(out). The enzyme catalyses beta-alanine(out) + n H(+)(in) = beta-alanine(in) + n H(+)(out). In terms of biological role, antiporter that exchanges vesicular protons for cytosolic 4-aminobutanoate or to a lesser extend glycine, thus allowing their secretion from nerve terminals. The transport is equally dependent on the chemical and electrical components of the proton gradient. May also transport beta-alanine. Acidification of GABAergic synaptic vesicles is a prerequisite for 4-aminobutanoate uptake. This chain is Vesicular inhibitory amino acid transporter, found in Xenopus tropicalis (Western clawed frog).